The primary structure comprises 764 residues: Palmitoyltransferase AKR1 (764 aa).

Disordered regions lie at residues methionine 1–asparagine 38 and serine 51–aspartate 71. The Cytoplasmic portion of the chain corresponds to methionine 1 to histidine 321. Residues arginine 10 to aspartate 27 show a composition bias toward polar residues. 2 positions are modified to phosphoserine: serine 51 and serine 57. ANK repeat units follow at residues proline 72–asparagine 102, glutamate 108–alanine 137, leucine 142–methionine 171, glutamine 175–leucine 204, lysine 213–isoleucine 242, and glutamate 246–glutamine 275. A helical membrane pass occupies residues alanine 322–phenylalanine 341. The Lumenal segment spans residues serine 342–proline 346. The helical transmembrane segment at leucine 347–leucine 364 threads the bilayer. Over asparagine 365 to arginine 384 the chain is Cytoplasmic. Residues serine 385–phenylalanine 405 form a helical membrane-spanning segment. Residues lysine 406–threonine 418 lie on the Lumenal side of the membrane. The helical transmembrane segment at asparagine 419–methionine 439 threads the bilayer. Topologically, residues aspartate 440–lysine 513 are cytoplasmic. Positions asparagine 470 to threonine 520 constitute a DHHC domain. Cysteine 500 functions as the S-palmitoyl cysteine intermediate in the catalytic mechanism. The helical transmembrane segment at alanine 514–leucine 534 threads the bilayer. Residues glutamate 535 to arginine 570 are Lumenal-facing. Residues phenylalanine 571–phenylalanine 591 traverse the membrane as a helical segment. Topologically, residues valine 592–valine 764 are cytoplasmic.

This sequence belongs to the DHHC palmitoyltransferase family. AKR/ZDHHC17 subfamily.

It is found in the early endosome membrane. The protein resides in the golgi apparatus membrane. The enzyme catalyses L-cysteinyl-[protein] + hexadecanoyl-CoA = S-hexadecanoyl-L-cysteinyl-[protein] + CoA. Its function is as follows. Palmitoyltransferase specific for casein kinase 1. Palmitoylates isoforms YCK1 and YCK2 at both C-terminal cysteine residues, which is required for their proper plasma membrane localization. Required for constitutive endocytosis of a-factor receptor STE3 and both constitutive and pheromone-induced endocytosis of alpha-factor receptor STE2. The protein is Palmitoyltransferase AKR1 (AKR1) of Saccharomyces cerevisiae (strain ATCC 204508 / S288c) (Baker's yeast).